The sequence spans 219 residues: Small ribosomal subunit protein uS3c (219 aa).

In terms of domain architecture, KH type-2 spans 39 to 118; that stretch reads IRSFIRKYIQ…RLNIVITKVE (80 aa).

The protein belongs to the universal ribosomal protein uS3 family. Part of the 30S ribosomal subunit.

The protein localises to the plastid. In Cuscuta obtusiflora (Peruvian dodder), this protein is Small ribosomal subunit protein uS3c (rps3).